Reading from the N-terminus, the 255-residue chain is uncharacterized protein (255 aa).

The protein belongs to the methyltransferase superfamily.

This is an uncharacterized protein from Mycobacterium marinum (strain ATCC BAA-535 / M).